The chain runs to 624 residues: Bifunctional protein ArgH (624 aa).

Positions 1–466 are argininosuccinate lyase; it reads MALWGGRFSQ…QERDNAGVKV (466 aa). The N-acetyltransferase domain occupies 464 to 614; sequence VKVRPARLTD…DEVALEVNLQ (151 aa). Residues 467-624 are probable acetyltransferase; the sequence is RPARLTDLDA…EQVIIKSSVA (158 aa).

In the N-terminal section; belongs to the lyase 1 family. Argininosuccinate lyase subfamily.

The protein localises to the cytoplasm. It catalyses the reaction 2-(N(omega)-L-arginino)succinate = fumarate + L-arginine. The protein operates within amino-acid biosynthesis; L-arginine biosynthesis; L-arginine from L-ornithine and carbamoyl phosphate: step 3/3. The protein is Bifunctional protein ArgH (argH) of Aliivibrio fischeri (strain ATCC 700601 / ES114) (Vibrio fischeri).